The following is a 475-amino-acid chain: ATP synthase subunit beta, chloroplastic (475 aa).

Residue 156 to 163 (GGAGVGKT) coordinates ATP.

The protein belongs to the ATPase alpha/beta chains family. As to quaternary structure, F-type ATPases have 2 components, CF(1) - the catalytic core - and CF(0) - the membrane proton channel. CF(1) has five subunits: alpha(3), beta(3), gamma(1), delta(1), epsilon(1). CF(0) has four main subunits: a(1), b(1), b'(1) and c(9-12).

The protein resides in the plastid. It localises to the chloroplast thylakoid membrane. It carries out the reaction ATP + H2O + 4 H(+)(in) = ADP + phosphate + 5 H(+)(out). Its function is as follows. Produces ATP from ADP in the presence of a proton gradient across the membrane. The catalytic sites are hosted primarily by the beta subunits. The chain is ATP synthase subunit beta, chloroplastic from Trieres chinensis (Marine centric diatom).